A 186-amino-acid chain; its full sequence is Ribosome-recycling factor (186 aa).

This sequence belongs to the RRF family.

The protein resides in the cytoplasm. In terms of biological role, responsible for the release of ribosomes from messenger RNA at the termination of protein biosynthesis. May increase the efficiency of translation by recycling ribosomes from one round of translation to another. The protein is Ribosome-recycling factor of Bordetella parapertussis (strain 12822 / ATCC BAA-587 / NCTC 13253).